We begin with the raw amino-acid sequence, 196 residues long: GTP cyclohydrolase-2 (196 aa).

49–53 is a binding site for GTP; that stretch reads RVHSE. Zn(2+) contacts are provided by cysteine 54, cysteine 65, and cysteine 67. Residues glutamine 70, 92-94, and threonine 114 each bind GTP; that span reads EGR. The active-site Proton acceptor is aspartate 126. The active-site Nucleophile is the arginine 128. Residues threonine 149 and lysine 154 each contribute to the GTP site.

The protein belongs to the GTP cyclohydrolase II family. Homodimer. Requires Zn(2+) as cofactor.

It carries out the reaction GTP + 4 H2O = 2,5-diamino-6-hydroxy-4-(5-phosphoribosylamino)-pyrimidine + formate + 2 phosphate + 3 H(+). It functions in the pathway cofactor biosynthesis; riboflavin biosynthesis; 5-amino-6-(D-ribitylamino)uracil from GTP: step 1/4. Functionally, catalyzes the conversion of GTP to 2,5-diamino-6-ribosylamino-4(3H)-pyrimidinone 5'-phosphate (DARP), formate and pyrophosphate. The sequence is that of GTP cyclohydrolase-2 from Yersinia pestis.